The chain runs to 672 residues: Spermatid perinuclear RNA-binding protein (672 aa).

Residues 5–362 (RSFANDDRHV…ALKRPFEDGV (358 aa)) enclose the DZF domain. The segment at 348-370 (GTGSSALKRPFEDGVGDDKDPNK) is disordered. Over residues 356-370 (RPFEDGVGDDKDPNK) the composition is skewed to basic and acidic residues. The DRBM 1 domain occupies 386 to 452 (DLMNALMRLN…AVKVLQAMGY (67 aa)). The interval 463–494 (VSSDEKSDNEGKNETVSSISSNNTGNSTADTS) is disordered. The segment covering 465 to 475 (SDEKSDNEGKN) has biased composition (basic and acidic residues). Over residues 477 to 490 (TVSSISSNNTGNST) the composition is skewed to low complexity. A DRBM 2 domain is found at 509 to 575 (SGKNPVMELN…ALAALEKLFS (67 aa)).

It is found in the cytoplasm. In terms of biological role, may be involved in normal spermatogenesis and sperm function. Binds to double-stranded DNA and RNA. The sequence is that of Spermatid perinuclear RNA-binding protein (STRBP) from Gallus gallus (Chicken).